Here is an 80-residue protein sequence, read N- to C-terminus: Large ribosomal subunit protein bL28 (80 aa).

The tract at residues 1-23 is disordered; sequence MARVCQITGKKTRTGNNVSHANN.

This sequence belongs to the bacterial ribosomal protein bL28 family.

The chain is Large ribosomal subunit protein bL28 from Cytophaga hutchinsonii (strain ATCC 33406 / DSM 1761 / CIP 103989 / NBRC 15051 / NCIMB 9469 / D465).